A 72-amino-acid chain; its full sequence is Large ribosomal subunit protein uL29 (72 aa).

Belongs to the universal ribosomal protein uL29 family.

This Caldicellulosiruptor saccharolyticus (strain ATCC 43494 / DSM 8903 / Tp8T 6331) protein is Large ribosomal subunit protein uL29.